Reading from the N-terminus, the 181-residue chain is Lysozyme C (181 aa).

Positions 1 to 19 (MRIAFFLLILSIIVGLAYG) are cleaved as a signal peptide. A propeptide spanning residues 139–181 (LTDSRPLGPFNVTEEEMDQLFIDHEIAMAQCEAEKTCNGFDLE) is cleaved from the precursor.

Belongs to the dictyostelium lysozyme family. Contains six disulfide bonds.

The protein localises to the cytoplasmic vesicle lumen. It carries out the reaction Hydrolysis of (1-&gt;4)-beta-linkages between N-acetylmuramic acid and N-acetyl-D-glucosamine residues in a peptidoglycan and between N-acetyl-D-glucosamine residues in chitodextrins.. Functionally, has antibacterial activity. The polypeptide is Lysozyme C (alyC) (Dictyostelium discoideum (Social amoeba)).